Here is a 156-residue protein sequence, read N- to C-terminus: Ribosomal RNA large subunit methyltransferase H (156 aa).

S-adenosyl-L-methionine contacts are provided by residues Leu73, Gly104, and 123–128; that span reads ISSMTL.

This sequence belongs to the RNA methyltransferase RlmH family. In terms of assembly, homodimer.

It localises to the cytoplasm. It catalyses the reaction pseudouridine(1915) in 23S rRNA + S-adenosyl-L-methionine = N(3)-methylpseudouridine(1915) in 23S rRNA + S-adenosyl-L-homocysteine + H(+). Functionally, specifically methylates the pseudouridine at position 1915 (m3Psi1915) in 23S rRNA. The protein is Ribosomal RNA large subunit methyltransferase H of Janthinobacterium sp. (strain Marseille) (Minibacterium massiliensis).